The sequence spans 139 residues: Metallothiol transferase FosB (139 aa).

The region spanning 4–119 (GINHITYSVS…DGHKLELHTG (116 aa)) is the VOC domain. Mg(2+)-binding residues include His-7, His-66, and Glu-115. Glu-115 (proton donor/acceptor) is an active-site residue.

This sequence belongs to the fosfomycin resistance protein family. FosB subfamily. In terms of assembly, homodimer. The cofactor is Mg(2+).

It localises to the cytoplasm. Its function is as follows. Metallothiol transferase which confers resistance to fosfomycin by catalyzing the addition of a thiol cofactor to fosfomycin. L-cysteine is probably the physiological thiol donor. This is Metallothiol transferase FosB from Staphylococcus epidermidis.